We begin with the raw amino-acid sequence, 156 residues long: Arginine repressor (156 aa).

Belongs to the ArgR family.

The protein localises to the cytoplasm. Its pathway is amino-acid biosynthesis; L-arginine biosynthesis [regulation]. Functionally, regulates arginine biosynthesis genes. This chain is Arginine repressor, found in Enterobacter sp. (strain 638).